Consider the following 576-residue polypeptide: Gamma-aminobutyric acid receptor subunit beta (576 aa).

A signal peptide spans 1–29 (MSDSMLYQTLQTCLPKSRLITLWLAFTLA). Over 30 to 268 (MLIQEPRRHA…IQFVRSMGYY (239 aa)) the chain is Extracellular. Residue Asn56 is glycosylated (N-linked (GlcNAc...) asparagine). Cys183 and Cys197 are oxidised to a cystine. Asn251 carries N-linked (GlcNAc...) asparagine glycosylation. 3 helical membrane passes run 269–289 (LIQI…SFWL), 298–320 (VALG…AALP), and 330–350 (VYLG…ATVG). The Cytoplasmic portion of the chain corresponds to 351 to 540 (YMAKRIQMRK…TPSDIDKYSR (190 aa)). Disordered regions lie at residues 372 to 418 (QKKQ…QTVS) and 452 to 507 (HDPK…GDAE). Positions 398–412 (HGHGHGHHSHGHPHV) are enriched in basic residues. A compositionally biased stretch (pro residues) spans 475-490 (PVGPHGPGPQGPPGGP). Residues 491 to 501 (PAGGGGGGAPP) are compositionally biased toward gly residues. The helical transmembrane segment at 541-561 (IVFPVCFVCFNLMYWIIYLHV) threads the bilayer.

Belongs to the ligand-gated ion channel (TC 1.A.9) family. Gamma-aminobutyric acid receptor (TC 1.A.9.5) subfamily. Homomultimer.

It localises to the postsynaptic cell membrane. The protein localises to the cell membrane. Its function is as follows. GABA, an inhibitory neurotransmitter, mediates neuronal inhibition by binding to the GABA receptor and opening an integral chloride channel. This Musca domestica (House fly) protein is Gamma-aminobutyric acid receptor subunit beta.